A 536-amino-acid chain; its full sequence is Transcription factor cheR (536 aa).

The segment at residues 19–57 (CDRCHRHKLRCERSSVIVNGGVAVPLGPCKRCLKACIPC) is a DNA-binding region (zn(2)-C6 fungal-type). Disordered regions lie at residues 70–122 (AKTG…LSGT) and 220–243 (ALTD…PREE). The span at 88-108 (AASPAKRAPSPARRPTASTPR) shows a compositional bias: low complexity.

The protein localises to the nucleus. Transcription factor; part of the gene cluster that mediates the biosynthesis of chaetoglobosin A which has a unique inhibitory activity against actin polymerization in mammalian cells. Chaetoglobosin A and its intermediates are involved in the morphological differentiation of C.globosum. Binds directly to asymmetric direct repeats present in the promoters of the chaetoglobosin A cluster genes. The protein is Transcription factor cheR of Chaetomium globosum (strain ATCC 6205 / CBS 148.51 / DSM 1962 / NBRC 6347 / NRRL 1970) (Soil fungus).